The sequence spans 283 residues: 2-dehydro-3-deoxyphosphooctonate aldolase (283 aa).

Belongs to the KdsA family.

The protein resides in the cytoplasm. It catalyses the reaction D-arabinose 5-phosphate + phosphoenolpyruvate + H2O = 3-deoxy-alpha-D-manno-2-octulosonate-8-phosphate + phosphate. It functions in the pathway carbohydrate biosynthesis; 3-deoxy-D-manno-octulosonate biosynthesis; 3-deoxy-D-manno-octulosonate from D-ribulose 5-phosphate: step 2/3. The protein operates within bacterial outer membrane biogenesis; lipopolysaccharide biosynthesis. This Vibrio campbellii (strain ATCC BAA-1116) protein is 2-dehydro-3-deoxyphosphooctonate aldolase.